Consider the following 474-residue polypeptide: tRNA-2-methylthio-N(6)-dimethylallyladenosine synthase (474 aa).

One can recognise an MTTase N-terminal domain in the interval 3-120; the sequence is KKLHIKTWGC…LPEMINAVRG (118 aa). [4Fe-4S] cluster-binding residues include Cys12, Cys49, Cys83, Cys157, Cys161, and Cys164. Positions 143–375 constitute a Radical SAM core domain; the sequence is RADGPTAFVS…QERINQQAMA (233 aa). Residues 378 to 441 form the TRAM domain; sequence RRMLGTVQRI…TNSLRGKIVR (64 aa).

This sequence belongs to the methylthiotransferase family. MiaB subfamily. Monomer. [4Fe-4S] cluster serves as cofactor.

It localises to the cytoplasm. The enzyme catalyses N(6)-dimethylallyladenosine(37) in tRNA + (sulfur carrier)-SH + AH2 + 2 S-adenosyl-L-methionine = 2-methylsulfanyl-N(6)-dimethylallyladenosine(37) in tRNA + (sulfur carrier)-H + 5'-deoxyadenosine + L-methionine + A + S-adenosyl-L-homocysteine + 2 H(+). Its function is as follows. Catalyzes the methylthiolation of N6-(dimethylallyl)adenosine (i(6)A), leading to the formation of 2-methylthio-N6-(dimethylallyl)adenosine (ms(2)i(6)A) at position 37 in tRNAs that read codons beginning with uridine. This chain is tRNA-2-methylthio-N(6)-dimethylallyladenosine synthase, found in Klebsiella pneumoniae (strain 342).